We begin with the raw amino-acid sequence, 255 residues long: Myogenic factor 5 (255 aa).

A bHLH domain is found at 83-134; that stretch reads DRRKAATMRERRRLKKVNQAFDTLKRCTTTNPNQRLPKVEILRNAIRYIESL. The interval 217 to 249 is disordered; the sequence is SEQPGLPLQDPASLSPVASTDSQPATPGASSSR. The span at 232 to 249 shows a compositional bias: polar residues; sequence PVASTDSQPATPGASSSR.

As to quaternary structure, efficient DNA binding requires dimerization with another bHLH protein.

It is found in the nucleus. In terms of biological role, acts as a transcriptional activator that promotes transcription of muscle-specific target genes and plays a role in muscle differentiation. Together with MYOG and MYOD1, co-occupies muscle-specific gene promoter core region during myogenesis. Induces fibroblasts to differentiate into myoblasts. Probable sequence specific DNA-binding protein. The sequence is that of Myogenic factor 5 (MYF5) from Bos taurus (Bovine).